Reading from the N-terminus, the 362-residue chain is Histidinol-phosphate aminotransferase (362 aa).

Position 218 is an N6-(pyridoxal phosphate)lysine (Lys-218).

It belongs to the class-II pyridoxal-phosphate-dependent aminotransferase family. Histidinol-phosphate aminotransferase subfamily. In terms of assembly, homodimer. Pyridoxal 5'-phosphate is required as a cofactor.

The enzyme catalyses L-histidinol phosphate + 2-oxoglutarate = 3-(imidazol-4-yl)-2-oxopropyl phosphate + L-glutamate. Its pathway is amino-acid biosynthesis; L-histidine biosynthesis; L-histidine from 5-phospho-alpha-D-ribose 1-diphosphate: step 7/9. The chain is Histidinol-phosphate aminotransferase from Ruegeria sp. (strain TM1040) (Silicibacter sp.).